Consider the following 106-residue polypeptide: Replication protein A 14 kDa subunit B (106 aa).

An N-acetylmethionine modification is found at methionine 1.

It belongs to the replication factor A protein 3 family. In terms of assembly, component of the heterotrimeric canonical replication protein A complex (RPA).

The protein resides in the nucleus. As part of the replication protein A (RPA/RP-A), a single-stranded DNA-binding heterotrimeric complex, may play an essential role in DNA replication, recombination and repair. Binds and stabilizes single-stranded DNA intermediates, preventing complementary DNA reannealing and recruiting different proteins involved in DNA metabolism. The protein is Replication protein A 14 kDa subunit B (RPA3B) of Arabidopsis thaliana (Mouse-ear cress).